Consider the following 423-residue polypeptide: Serine--tRNA ligase (423 aa).

Over residues 1–12 the composition is skewed to basic and acidic residues; it reads MIDLKALRENPD. The disordered stretch occupies residues 1-26; the sequence is MIDLKALRENPDVGRASQRSRGEDPE. 230 to 232 lines the L-serine pocket; sequence TSE. Residues 261-263 and valine 277 each bind ATP; that span reads RRE. L-serine is bound at residue glutamate 284. Position 348–351 (348–351) interacts with ATP; the sequence is ELTS. Threonine 383 lines the L-serine pocket.

This sequence belongs to the class-II aminoacyl-tRNA synthetase family. Type-1 seryl-tRNA synthetase subfamily. Homodimer. The tRNA molecule binds across the dimer.

The protein localises to the cytoplasm. The catalysed reaction is tRNA(Ser) + L-serine + ATP = L-seryl-tRNA(Ser) + AMP + diphosphate + H(+). It catalyses the reaction tRNA(Sec) + L-serine + ATP = L-seryl-tRNA(Sec) + AMP + diphosphate + H(+). It participates in aminoacyl-tRNA biosynthesis; selenocysteinyl-tRNA(Sec) biosynthesis; L-seryl-tRNA(Sec) from L-serine and tRNA(Sec): step 1/1. Its function is as follows. Catalyzes the attachment of serine to tRNA(Ser). Is also able to aminoacylate tRNA(Sec) with serine, to form the misacylated tRNA L-seryl-tRNA(Sec), which will be further converted into selenocysteinyl-tRNA(Sec). This chain is Serine--tRNA ligase, found in Beutenbergia cavernae (strain ATCC BAA-8 / DSM 12333 / CCUG 43141 / JCM 11478 / NBRC 16432 / NCIMB 13614 / HKI 0122).